The following is a 72-amino-acid chain: Translation initiation factor IF-1 (72 aa).

An S1-like domain is found at 1-72 (MAKEDCIEME…TKGRIKFRSK (72 aa)).

The protein belongs to the IF-1 family. In terms of assembly, component of the 30S ribosomal translation pre-initiation complex which assembles on the 30S ribosome in the order IF-2 and IF-3, IF-1 and N-formylmethionyl-tRNA(fMet); mRNA recruitment can occur at any time during PIC assembly.

The protein localises to the cytoplasm. One of the essential components for the initiation of protein synthesis. Stabilizes the binding of IF-2 and IF-3 on the 30S subunit to which N-formylmethionyl-tRNA(fMet) subsequently binds. Helps modulate mRNA selection, yielding the 30S pre-initiation complex (PIC). Upon addition of the 50S ribosomal subunit IF-1, IF-2 and IF-3 are released leaving the mature 70S translation initiation complex. The protein is Translation initiation factor IF-1 of Francisella tularensis subsp. tularensis (strain FSC 198).